Reading from the N-terminus, the 386-residue chain is Leupaxin (386 aa).

Methionine 1 carries the N-acetylmethionine modification. The short motif at 3-15 is the LD motif 1 element; the sequence is ELDALLEELERCT. A Phosphoserine modification is found at serine 19. The tract at residues 19-52 is disordered; sequence SEEYSNPVSCHLDQQSTEESKIPQTPKTLSSQGN. Position 22 is a phosphotyrosine (tyrosine 22). Residues 22–52 show a composition bias toward polar residues; the sequence is YSNPVSCHLDQQSTEESKIPQTPKTLSSQGN. A Phosphoserine modification is found at serine 54. Tyrosine 62 carries the post-translational modification Phosphotyrosine. 2 short sequence motifs (LD motif) span residues 70–82 and 92–103; these read NVYS…KESV and QLDELMAHLSEM. Tyrosine 72 carries the phosphotyrosine; by LYN modification. Phosphoserine is present on serine 81. LIM zinc-binding domains lie at 150–208, 209–267, 268–326, and 327–386; these read GYCA…RLFS, PRCA…AMFS, PKCG…HRRG, and TLCH…LFSQ.

Belongs to the paxillin family. Interacts with unphosphorylated ITGA4. Interacts with AR and SRF. Interacts with PTK2B/PYK2, PTPN22 and PTPN12. Interacts (via LD motif 3) with LYN and the interaction is induced upon B-cell antigen receptor (BCR) activation. Interacts (via LD motif 3) with PTK2/FAK. In terms of processing, phosphorylated on tyrosine residues. Phosphorylation on Tyr-72 is important for its inhibitory function. Bombesin stimulates phosphorylation on Tyr-22, Tyr-62 and Tyr-72. As to expression, expressed in osteoclasts (at protein level). Highly expressed in vascular smooth muscle.

Its subcellular location is the cytoplasm. The protein resides in the cell junction. It is found in the focal adhesion. The protein localises to the nucleus. It localises to the perinuclear region. Its subcellular location is the cell projection. The protein resides in the podosome. It is found in the cell membrane. Transcriptional coactivator for androgen receptor (AR) and serum response factor (SRF). Contributes to the regulation of cell adhesion, spreading and cell migration and acts as a negative regulator in integrin-mediated cell adhesion events. Suppresses the integrin-induced tyrosine phosphorylation of paxillin (PXN). May play a critical role as an adapter protein in the formation of the adhesion zone in osteoclasts. Negatively regulates B-cell antigen receptor (BCR) signaling. The sequence is that of Leupaxin (Lpxn) from Mus musculus (Mouse).